Consider the following 179-residue polypeptide: Large ribosomal subunit protein uL5 (179 aa).

It belongs to the universal ribosomal protein uL5 family. In terms of assembly, part of the 50S ribosomal subunit; part of the 5S rRNA/L5/L18/L25 subcomplex. Contacts the 5S rRNA and the P site tRNA. Forms a bridge to the 30S subunit in the 70S ribosome.

This is one of the proteins that bind and probably mediate the attachment of the 5S RNA into the large ribosomal subunit, where it forms part of the central protuberance. In the 70S ribosome it contacts protein S13 of the 30S subunit (bridge B1b), connecting the 2 subunits; this bridge is implicated in subunit movement. Contacts the P site tRNA; the 5S rRNA and some of its associated proteins might help stabilize positioning of ribosome-bound tRNAs. The chain is Large ribosomal subunit protein uL5 from Bacillus cereus (strain G9842).